The following is a 96-amino-acid chain: Large ribosomal subunit protein bL27 (96 aa).

The interval 12–33 (HKGGGSSANGRNSAGRRLGAKA) is disordered. Low complexity predominate over residues 19–28 (ANGRNSAGRR).

The protein belongs to the bacterial ribosomal protein bL27 family.

In Lactobacillus helveticus (strain DPC 4571), this protein is Large ribosomal subunit protein bL27.